Consider the following 247-residue polypeptide: Probable transcriptional regulatory protein PBPRA1113 (247 aa).

This sequence belongs to the TACO1 family.

It localises to the cytoplasm. The protein is Probable transcriptional regulatory protein PBPRA1113 of Photobacterium profundum (strain SS9).